The primary structure comprises 210 residues: Small ribosomal subunit protein uS3 (210 aa).

The KH type-2 domain maps to 38–106 (IRAWLKKRLA…EVQINIVEIR (69 aa)).

The protein belongs to the universal ribosomal protein uS3 family. Part of the 30S ribosomal subunit. Forms a tight complex with proteins S10 and S14.

Its function is as follows. Binds the lower part of the 30S subunit head. Binds mRNA in the 70S ribosome, positioning it for translation. The chain is Small ribosomal subunit protein uS3 from Magnetococcus marinus (strain ATCC BAA-1437 / JCM 17883 / MC-1).